The sequence spans 192 residues: MITISETAQAHFVKLLSDQPEGTHIRVFVISPGTAQAECGVSYCPPDAVEADDTEFEFNGFNAMVDEKSAPFLEEATIDFVTDQLGSQLTLKAPNAKMRKVSDDASLSERIEYVIQSEINPQLASHGGNIMLVEITEEGIAVLQFGGGCNGCSMVDVTLKDGIEKQLLEMFPSELTGVKDVTEHQHGEHSYQ.

[4Fe-4S] cluster is bound by residues Cys149 and Cys152.

The protein belongs to the NfuA family. Homodimer. Requires [4Fe-4S] cluster as cofactor.

Functionally, involved in iron-sulfur cluster biogenesis. Binds a 4Fe-4S cluster, can transfer this cluster to apoproteins, and thereby intervenes in the maturation of Fe/S proteins. Could also act as a scaffold/chaperone for damaged Fe/S proteins. The polypeptide is Fe/S biogenesis protein NfuA (Shewanella halifaxensis (strain HAW-EB4)).